A 158-amino-acid chain; its full sequence is C-type lectin BML-2 (158 aa).

The N-terminal stretch at 1 to 23 is a signal peptide; that stretch reads MGHFTFTGLCLLAMFLSLRGAEC. Cystine bridges form between Cys-26–Cys-37, Cys-54–Cys-154, Cys-61–Cys-156, and Cys-129–Cys-146. A C-type lectin domain is found at 33–155; the sequence is KNGLCYKVFS…CESLHPFLCQ (123 aa). A Mannose-binding motif is present at residues 119–121; the sequence is EPN. The N-linked (GlcNAc...) asparagine glycan is linked to Asn-121. Glu-127, Asn-142, and Asp-143 together coordinate Ca(2+).

The protein belongs to the true venom lectin family. Dimer. Probably non-covalently linked. Expressed by the venom gland.

The protein localises to the secreted. Its function is as follows. Recombinant C-type lectin BML-2 is able to agglutinate erythrocytes. May be a calcium-dependent lectin. The chain is C-type lectin BML-2 from Bungarus multicinctus (Many-banded krait).